The primary structure comprises 102 residues: Large ribosomal subunit protein bL21 (102 aa).

This sequence belongs to the bacterial ribosomal protein bL21 family. As to quaternary structure, part of the 50S ribosomal subunit. Contacts protein L20.

This protein binds to 23S rRNA in the presence of protein L20. The sequence is that of Large ribosomal subunit protein bL21 from Staphylococcus haemolyticus (strain JCSC1435).